The sequence spans 109 residues: Staphostatin B (109 aa).

The tract at residues 97–101 (IGTSR) is binds to staphopain B.

It belongs to the protease inhibitor I57 (SspC) family. In terms of assembly, forms a stable non-covalent complex with prematurely activated/folded SspB.

It is found in the cytoplasm. Functionally, specifically inhibits the cysteine protease staphopain B (SspB) by blocking the active site of the enzyme. Probably required to protect cytoplasmic proteins from being degraded by prematurely activated/folded prostaphopain B. Also involved in growth capacity, viability and bacterial morphology. This is Staphostatin B (sspC) from Staphylococcus aureus (strain Mu50 / ATCC 700699).